The sequence spans 290 residues: Transposon Ty3-I Gag polyprotein (290 aa).

S2 is modified (N-acetylserine). The CCHC-type zinc-finger motif lies at R265–A282.

It is found in the cytoplasm. Functionally, capsid protein (CA) is the structural component of the virus-like particle (VLP), forming the shell that encapsulates the retrotransposons dimeric RNA genome. Its function is as follows. Nucleocapsid protein p9 (NC) forms the nucleocore that coats the retro-elements dimeric RNA. Binds these RNAs through its zinc fingers. Promotes primer tRNA(i)-Met annealing to the multipartite primer-binding site (PBS), dimerization of Ty3 RNA and initiation of reverse transcription. This Saccharomyces cerevisiae (strain ATCC 204508 / S288c) (Baker's yeast) protein is Transposon Ty3-I Gag polyprotein (TY3A-I).